The primary structure comprises 256 residues: Imidazole glycerol phosphate synthase subunit HisF (256 aa).

Catalysis depends on residues Asp-11 and Asp-130.

This sequence belongs to the HisA/HisF family. In terms of assembly, heterodimer of HisH and HisF.

Its subcellular location is the cytoplasm. The enzyme catalyses 5-[(5-phospho-1-deoxy-D-ribulos-1-ylimino)methylamino]-1-(5-phospho-beta-D-ribosyl)imidazole-4-carboxamide + L-glutamine = D-erythro-1-(imidazol-4-yl)glycerol 3-phosphate + 5-amino-1-(5-phospho-beta-D-ribosyl)imidazole-4-carboxamide + L-glutamate + H(+). It participates in amino-acid biosynthesis; L-histidine biosynthesis; L-histidine from 5-phospho-alpha-D-ribose 1-diphosphate: step 5/9. In terms of biological role, IGPS catalyzes the conversion of PRFAR and glutamine to IGP, AICAR and glutamate. The HisF subunit catalyzes the cyclization activity that produces IGP and AICAR from PRFAR using the ammonia provided by the HisH subunit. The protein is Imidazole glycerol phosphate synthase subunit HisF of Cupriavidus metallidurans (strain ATCC 43123 / DSM 2839 / NBRC 102507 / CH34) (Ralstonia metallidurans).